Consider the following 1130-residue polypeptide: Integrin alpha-6 (1130 aa).

Positions 1 to 23 (MAAAGQLCLLYLSAGLLSRLGAA) are cleaved as a signal peptide. The Extracellular portion of the chain corresponds to 24 to 1050 (FNLDTREDNV…FPSKTVAQYS (1027 aa)). FG-GAP repeat units lie at residues 30-95 (EDNV…GPCT), 101-166 (NDAD…IEDD), 176-229 (DGRL…FFDM), 283-339 (EQPD…KSAH), 340-402 (LLPE…RWNN), 403-458 (VKPI…GINT), and 459-518 (KPTQ…VTPN). The N-linked (GlcNAc...) asparagine glycan is linked to N78. Cystine bridges form between C86–C94, C131–C154, and C175–C188. 2 N-linked (GlcNAc...) asparagine glycosylation sites follow: N223 and N323. D363, N365, D367, and D371 together coordinate Ca(2+). An N-linked (GlcNAc...) asparagine glycan is attached at N409. Residues D425, N427, D429, Y431, D433, D480, D482, N484, Y486, and D488 each contribute to the Ca(2+) site. 4 disulfide bridges follow: C528–C535, C541–C601, C665–C671, and C765–C776. Residues N770, N787, N930, and N966 are each glycosylated (N-linked (GlcNAc...) asparagine). Intrachain disulfides connect C920/C967 and C973/C978. A glycan (N-linked (GlcNAc...) asparagine) is linked at N997. Residues 1051–1076 (GVPWWIILVAILAGILMLALLVFILW) form a helical membrane-spanning segment. V1059 and G1064 each carry phosphoserine. Residues 1077–1083 (KCGFFKR) form an interaction with HPS5 region. Topologically, residues 1077–1130 (KCGFFKRSRYDDSVPRYHAVRIRKEEREIKDEKYIDNLEKKQWITKWNENESYS) are cytoplasmic. Residue C1078 is the site of S-palmitoyl cysteine; by DHHC3 attachment. The GFFKR motif motif lies at 1079–1083 (GFFKR). R1103 carries the phosphoserine modification.

Belongs to the integrin alpha chain family. Heterodimer of an alpha and a beta subunit. The alpha subunit is composed of a heavy and a light chain linked by a disulfide bond. Alpha-6 associates with either beta-1 (ITGB1) or beta-4 (ITGB4) to form ITGA6:ITGB1 and ITGA6:ITGB4, respectively. ITGA6:ITGB1 is found in a complex with CD9; interaction takes place in oocytes and is involved in sperm-egg fusion. ITGA6:ITGB4 is found in a ternary complex with NRG1 and ERBB3. ITGA6:ITGB4 is found in a ternary complex with IGF1 and IGF1R. ITGA6:ITGB4 interacts with IGF2. Interacts with ADAM9. Interacts with RAB21. Interacts with MDK. ITGA6:ITGB1 interacts with MDK; this interaction mediates MDK-induced neurite outgrowth. Interacts with CD82; this interaction down-regulates ITGA6-mediated cell adhesion. Isoforms containing segment A, but not segment B, are the major targets for PMA-induced phosphorylation. Phosphorylation occurs on 'Ser-1103' of isoform alpha-6X1X2A. Phosphorylation is not required for the induction of integrin alpha-6A/beta-1 high affinity but may reduce the affinity for ligand. Post-translationally, undergoes PLAU-mediated cleavage at residues Arg-634-635-Arg in a time-dependent manner to produce processed integrin alpha-6 (alpha6p). Production of alpha6p enhances prostate cancer cell invasion and migration. In terms of processing, palmitoylation by DHHC3 enhances stability and cell surface expression. Integrin alpha-6/beta-4 is predominantly expressed by epithelia. Isoforms containing segment X1 are ubiquitously expressed. Isoforms containing segment X1X2 are expressed in heart, kidney, placenta, colon, duodenum, myoblasts and myotubes, and in a limited number of cell lines; they are always coexpressed with the ubiquitous isoform containing segment X1. In some tissues (e.g. Salivary gland), isoforms containing cytoplasmic segment A and isoforms containing segment B are detected while in others, only isoforms containing one cytoplasmic segment are found (segment A in epidermis and segment B in kidney). Processed integrin alpha-6: Expressed at low levels in normal prostate tissue with elevated levels in prostate cancer tissue (at protein level).

Its subcellular location is the cell membrane. In terms of biological role, integrin alpha-6/beta-1 (ITGA6:ITGB1) is a receptor for laminin on platelets. Integrin alpha-6/beta-1 (ITGA6:ITGB1) is present in oocytes and is involved in sperm-egg fusion. Integrin alpha-6/beta-4 (ITGA6:ITGB4) is a receptor for laminin in epithelial cells and it plays a critical structural role in the hemidesmosome. ITGA6:ITGB4 binds to NRG1 (via EGF domain) and this binding is essential for NRG1-ERBB signaling. ITGA6:ITGB4 binds to IGF1 and this binding is essential for IGF1 signaling. ITGA6:ITGB4 binds to IGF2 and this binding is essential for IGF2 signaling. The polypeptide is Integrin alpha-6 (ITGA6) (Homo sapiens (Human)).